The sequence spans 329 residues: NAD(P)H-dependent D-xylose reductase (329 aa).

The Proton donor role is filled by tyrosine 52. A substrate-binding site is contributed by histidine 114. Residues 173–174 (SN), 222–231 (SSFGPVSFLE), and 278–288 (KSSKKERLLDN) each bind NAD(+).

The protein belongs to the aldo/keto reductase family.

It carries out the reaction xylitol + NAD(+) = D-xylose + NADH + H(+). It catalyses the reaction xylitol + NADP(+) = D-xylose + NADPH + H(+). Its pathway is carbohydrate metabolism; D-xylose degradation. In terms of biological role, reduces D-xylose into xylitol. The chain is NAD(P)H-dependent D-xylose reductase (XYL1) from Kluyveromyces lactis (strain ATCC 8585 / CBS 2359 / DSM 70799 / NBRC 1267 / NRRL Y-1140 / WM37) (Yeast).